We begin with the raw amino-acid sequence, 986 residues long: Anoctamin-1 (986 aa).

Residues Met1–Ala333 lie on the Cytoplasmic side of the membrane. The segment at Leu79 to Glu121 is disordered. Phosphoserine is present on residues Ser107 and Ser196. A helical transmembrane segment spans residues Trp334–Leu354. Residues Tyr355–Asn406 lie on the Extracellular side of the membrane. Cystine bridges form between Cys370–Cys395, Cys379–Cys862, Cys382–Cys386, and Cys651–Cys656. The chain crosses the membrane as a helical span at residues Pro407–Trp427. Residue Glu425 participates in Ca(2+) binding. The Cytoplasmic portion of the chain corresponds to Lys428–Asn519. The helical transmembrane segment at Leu520–Tyr540 threads the bilayer. Topologically, residues Arg541–Ala568 are extracellular. Residues Val569–Trp589 traverse the membrane as a helical segment. The Cytoplasmic segment spans residues Leu590–Ile607. Residues Phe608 to Phe628 form a helical membrane-spanning segment. The Extracellular segment spans residues Lys629–Leu657. A helical transmembrane segment spans residues Met658–Leu678. Residues Asn677, Glu680, Glu728, Glu731, Glu760, and Asp764 each contribute to the Ca(2+) site. The Cytoplasmic segment spans residues Phe679–Leu725. 2 helical membrane passes run Thr726–Phe746 and Pro747–Lys767. Topologically, residues Phe768–Gly784 are cytoplasmic. A helical membrane pass occupies residues Ile785–Ile805. Over Ser806–Ala892 the chain is Extracellular. Asn832 carries an N-linked (GlcNAc...) asparagine glycan. The chain crosses the membrane as a helical span at residues Phe893 to Pro913. Ca(2+) is bound by residues Asp909 and Asp914. Topologically, residues Asp914–Leu986 are cytoplasmic. The span at Lys951 to Cys960 shows a compositional bias: basic and acidic residues. The tract at residues Lys951 to Leu986 is disordered.

Belongs to the anoctamin family. In terms of assembly, homodimer. Interacts with CFTR. Interacts with TRPV4. As to expression, expressed in nasal epithelial cells (at protein level). In the kidney, expressed in the collecting duct (at protein level). Broadly expressed with higher levels in liver, skeletal muscle and gastrointestinal muscles. Expressed in eccrine sweat glands.

Its subcellular location is the apical cell membrane. The protein resides in the presynapse. It catalyses the reaction chloride(in) = chloride(out). ATP and calmodulin are essential for its activation. Channel activity is inhibited by CFTR protein and by chloride inhibitors such as niflumic acid (NFA) and 4,4'-diisothiocyanatostilbene-2,2'-disulfonic acid (DIDS). Activated by heat with activation seen at temperatures above 44 degrees Celsius. Activated by BDNF in radial glial cells. In terms of biological role, calcium-activated chloride channel (CaCC). Plays a role in transepithelial anion transport and smooth muscle contraction. Required for the normal functioning of the interstitial cells of Cajal (ICCs) which generate electrical pacemaker activity in gastrointestinal smooth muscles. Acts as a major contributor to basal and stimulated chloride conductance in airway epithelial cells and plays an important role in tracheal cartilage development. Required for CFTR activation by enhancing endoplasmic reticulum Ca(2+) store release and is also required for CFTR membrane expression. Required for basal and ATP-dependent mucus secretion in airways and intestine, probably by controlling exocytosis of mucus-filled granules by providing Ca(2+) to an apical signaling compartment. Contributes to airway mucus expression induced by interleukins IL3 and IL8 and by the asthma-associated protein CLCA1 and is required for expression of mucin MUC5AC. However, was shown in another study not to be required for MUC5AC expression. Plays a role in the propagation of Ca(2+) waves in Kolliker's organ in the cochlea and contributes to the refinement of auditory brainstem circuitries prior to hearing onset. In vomeronasal sensory neurons, modulates spontaneous firing patterns in the absence of stimuli as well as the firing pattern of pheromone-evoked activity. Responsible for calcium-activated chloride channel activity in type I taste cells of the vallate papillae. Acts as a heat sensor in nociceptive neurons. In dorsal root ganglion neurons, plays a role in mediating non-histaminergic Mas-related G-protein coupled receptor (MRGPR)-dependent itching, acting as a downstream effector of MRGPRs. In the developing brain, required for the Ca(2+)-dependent process extension of radial glial cells. Functionally, calcium-activated chloride channel (CaCC). Contributes to calcium-activated chloride secretion in human sweat gland epithelial cells. Shows increased basal chloride permeability and decreased Ca(2+)-induced chloride permeability. Its function is as follows. Calcium-activated chloride channel (CaCC). Shows increased sensitivity to intracellular Ca(2+). This chain is Anoctamin-1 (ANO1), found in Homo sapiens (Human).